Consider the following 108-residue polypeptide: Pyrimidine/purine nucleoside phosphorylase (108 aa).

The protein belongs to the nucleoside phosphorylase PpnP family.

The catalysed reaction is a purine D-ribonucleoside + phosphate = a purine nucleobase + alpha-D-ribose 1-phosphate. It carries out the reaction adenosine + phosphate = alpha-D-ribose 1-phosphate + adenine. The enzyme catalyses cytidine + phosphate = cytosine + alpha-D-ribose 1-phosphate. It catalyses the reaction guanosine + phosphate = alpha-D-ribose 1-phosphate + guanine. The catalysed reaction is inosine + phosphate = alpha-D-ribose 1-phosphate + hypoxanthine. It carries out the reaction thymidine + phosphate = 2-deoxy-alpha-D-ribose 1-phosphate + thymine. The enzyme catalyses uridine + phosphate = alpha-D-ribose 1-phosphate + uracil. It catalyses the reaction xanthosine + phosphate = alpha-D-ribose 1-phosphate + xanthine. Its function is as follows. Catalyzes the phosphorolysis of diverse nucleosides, yielding D-ribose 1-phosphate and the respective free bases. Can use uridine, adenosine, guanosine, cytidine, thymidine, inosine and xanthosine as substrates. Also catalyzes the reverse reactions. This chain is Pyrimidine/purine nucleoside phosphorylase, found in Polaromonas sp. (strain JS666 / ATCC BAA-500).